We begin with the raw amino-acid sequence, 356 residues long: S-adenosylmethionine:tRNA ribosyltransferase-isomerase (356 aa).

The protein belongs to the QueA family. As to quaternary structure, monomer.

The protein localises to the cytoplasm. It catalyses the reaction 7-aminomethyl-7-carbaguanosine(34) in tRNA + S-adenosyl-L-methionine = epoxyqueuosine(34) in tRNA + adenine + L-methionine + 2 H(+). The protein operates within tRNA modification; tRNA-queuosine biosynthesis. Its function is as follows. Transfers and isomerizes the ribose moiety from AdoMet to the 7-aminomethyl group of 7-deazaguanine (preQ1-tRNA) to give epoxyqueuosine (oQ-tRNA). The sequence is that of S-adenosylmethionine:tRNA ribosyltransferase-isomerase from Ralstonia nicotianae (strain ATCC BAA-1114 / GMI1000) (Ralstonia solanacearum).